Consider the following 155-residue polypeptide: SsrA-binding protein (155 aa).

Belongs to the SmpB family.

Its subcellular location is the cytoplasm. Functionally, required for rescue of stalled ribosomes mediated by trans-translation. Binds to transfer-messenger RNA (tmRNA), required for stable association of tmRNA with ribosomes. tmRNA and SmpB together mimic tRNA shape, replacing the anticodon stem-loop with SmpB. tmRNA is encoded by the ssrA gene; the 2 termini fold to resemble tRNA(Ala) and it encodes a 'tag peptide', a short internal open reading frame. During trans-translation Ala-aminoacylated tmRNA acts like a tRNA, entering the A-site of stalled ribosomes, displacing the stalled mRNA. The ribosome then switches to translate the ORF on the tmRNA; the nascent peptide is terminated with the 'tag peptide' encoded by the tmRNA and targeted for degradation. The ribosome is freed to recommence translation, which seems to be the essential function of trans-translation. In Bacillus cereus (strain ATCC 10987 / NRS 248), this protein is SsrA-binding protein.